A 365-amino-acid polypeptide reads, in one-letter code: Outer membrane protein assembly factor BamC (365 aa).

Residues 1–16 (MLKKVTPLFLVAAVAA) form the signal peptide. Cys-17 carries the N-palmitoyl cysteine lipid modification. The S-diacylglycerol cysteine moiety is linked to residue Cys-17.

The protein belongs to the BamC family. In terms of assembly, part of the Bam complex.

It localises to the cell outer membrane. Functionally, part of the outer membrane protein assembly complex, which is involved in assembly and insertion of beta-barrel proteins into the outer membrane. The protein is Outer membrane protein assembly factor BamC of Shewanella oneidensis (strain ATCC 700550 / JCM 31522 / CIP 106686 / LMG 19005 / NCIMB 14063 / MR-1).